Here is a 511-residue protein sequence, read N- to C-terminus: MASMITVDFENCFIFLLLCLFSRLSYDLFFRKTKDSRAGCALPPSPPSLPIIGHLHLILFVPIHQSFKNISSKYGPLLHLRFFNFPIVLVSSASTAYEIFKAQDVNVSSRPPPPIEESLILGSSSFINTPYGDYSKFMKKFMVQKLLGPQALQRSRNIRADELERFYKTLLDKAMKKQTVEIRNEAMKLTNNTICKMIMGRSCSEENGEAETVRGLVTESIFLTKKHFLGAMFHKPLKKLGISLFAKELMNVSNRFDELLEKILVEHEEKLQEHHQTSDMLDMLLEAYGDENAEYKITRDQIKSLFVDLFSAGTEASANTIQWTMAEIIKNPKICERLREEIDSVVGKTRLVQETDLPNLPYLQAIVKEGLRLHPPGPVVRTFKETCEIKGFYIPEKTRLFVNVYAIMRDPDFWEDPEEFKPERFLASSRLGEEDEKREDMLKYIPFGSGRRACPGSHLAYTVVGSVIGMMVQHFDWIIKGEKINMKEGGTMTLTMAHPLKCTPVPRNLNT.

The helical transmembrane segment at 12-30 (CFIFLLLCLFSRLSYDLFF) threads the bilayer. Cys-454 provides a ligand contact to heme.

The protein belongs to the cytochrome P450 family. Heme is required as a cofactor. As to expression, expressed primarily in the root epidermis.

The protein localises to the membrane. Its function is as follows. Converts thalian-diol to a desaturated thalian-diol. This is Cytochrome P450 705A5 (CYP705A5) from Arabidopsis thaliana (Mouse-ear cress).